Reading from the N-terminus, the 265-residue chain is Nitrogenase iron protein 2 (265 aa).

Residue 8–15 participates in ATP binding; it reads GKGGIGKS. Cysteine 91 is a [4Fe-4S] cluster binding site. At arginine 94 the chain carries ADP-ribosylarginine; by dinitrogenase reductase ADP-ribosyltransferase. Cysteine 126 serves as a coordination point for [4Fe-4S] cluster.

Belongs to the NifH/BchL/ChlL family. Homodimer. Requires [4Fe-4S] cluster as cofactor. The reversible ADP-ribosylation of Arg-94 inactivates the nitrogenase reductase and regulates nitrogenase activity.

It carries out the reaction N2 + 8 reduced [2Fe-2S]-[ferredoxin] + 16 ATP + 16 H2O = H2 + 8 oxidized [2Fe-2S]-[ferredoxin] + 2 NH4(+) + 16 ADP + 16 phosphate + 6 H(+). Its function is as follows. The key enzymatic reactions in nitrogen fixation are catalyzed by the nitrogenase complex, which has 2 components: the iron protein and the molybdenum-iron protein. The chain is Nitrogenase iron protein 2 (nifH2) from Methanothermobacter thermautotrophicus (strain ATCC 29096 / DSM 1053 / JCM 10044 / NBRC 100330 / Delta H) (Methanobacterium thermoautotrophicum).